The sequence spans 439 residues: Probable tRNA pseudouridine synthase D (439 aa).

Aspartate 87 acts as the Nucleophile in catalysis. The TRUD domain occupies 166–391; the sequence is GVPNFFGIQR…SKGLRREILL (226 aa).

Belongs to the pseudouridine synthase TruD family.

The catalysed reaction is uridine(13) in tRNA = pseudouridine(13) in tRNA. Functionally, could be responsible for synthesis of pseudouridine from uracil-13 in transfer RNAs. The sequence is that of Probable tRNA pseudouridine synthase D from Methanococcoides burtonii (strain DSM 6242 / NBRC 107633 / OCM 468 / ACE-M).